A 334-amino-acid chain; its full sequence is 6-phosphogluconolactonase (334 aa).

Belongs to the cycloisomerase 2 family.

It carries out the reaction 6-phospho-D-glucono-1,5-lactone + H2O = 6-phospho-D-gluconate + H(+). It functions in the pathway carbohydrate degradation; pentose phosphate pathway; D-ribulose 5-phosphate from D-glucose 6-phosphate (oxidative stage): step 2/3. In terms of biological role, catalyzes the hydrolysis of 6-phosphogluconolactone to 6-phosphogluconate. In Yersinia pseudotuberculosis serotype IB (strain PB1/+), this protein is 6-phosphogluconolactonase.